Reading from the N-terminus, the 306-residue chain is Curved DNA-binding protein (306 aa).

Positions 5 to 69 (DYYAIMGVKP…QRRAEYDQLW (65 aa)) constitute a J domain.

Its subcellular location is the cytoplasm. The protein resides in the nucleoid. Its function is as follows. DNA-binding protein that preferentially recognizes a curved DNA sequence. It is probably a functional analog of DnaJ; displays overlapping activities with DnaJ, but functions under different conditions, probably acting as a molecular chaperone in an adaptive response to environmental stresses other than heat shock. Lacks autonomous chaperone activity; binds native substrates and targets them for recognition by DnaK. Its activity is inhibited by the binding of CbpM. In Salmonella paratyphi A (strain ATCC 9150 / SARB42), this protein is Curved DNA-binding protein.